Consider the following 277-residue polypeptide: Large ribosomal subunit protein uL2 (277 aa).

The segment at 222 to 277 is disordered; the sequence is GVTMNPVDHPHGGGEGRTSGGRNPVTPWGFPTKGKKTRNNKATDKFIVSSRHKRKK.

This sequence belongs to the universal ribosomal protein uL2 family. Part of the 50S ribosomal subunit. Forms a bridge to the 30S subunit in the 70S ribosome.

Functionally, one of the primary rRNA binding proteins. Required for association of the 30S and 50S subunits to form the 70S ribosome, for tRNA binding and peptide bond formation. It has been suggested to have peptidyltransferase activity; this is somewhat controversial. Makes several contacts with the 16S rRNA in the 70S ribosome. This Xanthobacter autotrophicus (strain ATCC BAA-1158 / Py2) protein is Large ribosomal subunit protein uL2.